Reading from the N-terminus, the 277-residue chain is SF-assemblin (277 aa).

Positions 1-20 (MATSGMVSPTSGRPFSPMRS) are disordered. A nonhelical region region spans residues 1–27 (MATSGMVSPTSGRPFSPMRSSVLTTTG). The rod stretch occupies residues 28–277 (SAIKLEHVSE…KMVNMQHNSA (250 aa)). The stretch at 70-90 (RLEKSMEAEVKRRAESDKQLQ) forms a coiled coil.

This sequence belongs to the SF-assemblin family. The N-terminus is blocked.

It is found in the cytoplasm. It localises to the cytoskeleton. Its function is as follows. Major component of the striated microtubule-associated fibers (SMAFs; system-I-fibers). The sequence is that of SF-assemblin from Dunaliella bioculata (Green alga).